Here is a 355-residue protein sequence, read N- to C-terminus: Peptide chain release factor 1 (355 aa).

N5-methylglutamine is present on glutamine 231. The segment covering 280–293 has biased composition (basic and acidic residues); it reads KERKAKEQSERKDQ. Residues 280–307 are disordered; sequence KERKAKEQSERKDQVGTGDRSGRIRTYN.

Belongs to the prokaryotic/mitochondrial release factor family. In terms of processing, methylated by PrmC. Methylation increases the termination efficiency of RF1.

The protein localises to the cytoplasm. Functionally, peptide chain release factor 1 directs the termination of translation in response to the peptide chain termination codons UAG and UAA. The sequence is that of Peptide chain release factor 1 from Campylobacter hominis (strain ATCC BAA-381 / DSM 21671 / CCUG 45161 / LMG 19568 / NCTC 13146 / CH001A).